We begin with the raw amino-acid sequence, 118 residues long: Small ribosomal subunit protein uS13 (118 aa).

Residues 93-118 (KGLPVRGQRTKTNARTRKGPRKPIRK) are disordered.

It belongs to the universal ribosomal protein uS13 family. Part of the 30S ribosomal subunit. Forms a loose heterodimer with protein S19. Forms two bridges to the 50S subunit in the 70S ribosome.

Functionally, located at the top of the head of the 30S subunit, it contacts several helices of the 16S rRNA. In the 70S ribosome it contacts the 23S rRNA (bridge B1a) and protein L5 of the 50S subunit (bridge B1b), connecting the 2 subunits; these bridges are implicated in subunit movement. Contacts the tRNAs in the A and P-sites. The chain is Small ribosomal subunit protein uS13 from Ectopseudomonas mendocina (strain ymp) (Pseudomonas mendocina).